Consider the following 216-residue polypeptide: MSKAGKKVKAQQHGHLADHVSVGETQIPKASTQHLLRKAGSLSAAGDTEVPIRGFVHMKLHKLVQKSLLAMQLAKRKTIMKSDVKKAAELMHLPVFAIPTKDSGAKGSVFLSCRQKGAGSAGTGSETNSQEVRSQMKSTCLIIPKERFRTMAKEISKKEGHDVHIAEAALDMLQVIVESCTVRLLEKALVITYSGKRTRVTSKDIETAFMLEHGPL.

Positions 1–12 (MSKAGKKVKAQQ) are enriched in basic residues. A disordered region spans residues 1–23 (MSKAGKKVKAQQHGHLADHVSVG).

The protein localises to the host nucleus. It is found in the host cytoplasm. The protein resides in the virion. Histone-like protein that is recruited to viral factories during viral replication and participates in viral DNA packaging and virion production probably by forming unstable nucleosome-like particles. May compact the viral DNA. This is Histone doublet H4-H3 from Melbournevirus (MelV).